Here is a 441-residue protein sequence, read N- to C-terminus: MELICIGLSHRTAPLTVRERLALPESRQVDVLQRLAQAPVEALWVSTCNRVEVYLFAPDAAMARQRALMELQVLGGVEALEHLYEHQGEAALVHLFRVACSLDSMVLGEAQILGQVKEAFERGQGAGAVRGELMRACAAAFSCAKRVRTETAIGRAATSMAAAAVQLASKVFDGLAGKTVLVVGAGEMGELAARHLKQAGASKLYVTNRTLSRAEALAAEVGGQARPFEELLGLVAAADVVVCSTASQAPLFTRDNVGALGRGRRGRPLFMVDLAVPRDIDPAVGTLDWVHAYDVDDIQKFVADNAAARAEEAQKAGVLVAQEVARFVKERALREGTPVLARLRQRAEAIARSEVERTLGALGDGLNEKQRKSIEAMGRAIVNKLLHEPTARLRAVGPEGEGNRLAGAAAELFGLLEEEVGTAAAAPSVMAAPVQVATGGK.

Substrate-binding positions include 47-50 (TCNR), Ser-104, 109-111 (EAQ), and Gln-115. Cys-48 functions as the Nucleophile in the catalytic mechanism. Position 184 to 189 (184 to 189 (GAGEMG)) interacts with NADP(+).

This sequence belongs to the glutamyl-tRNA reductase family. In terms of assembly, homodimer.

It carries out the reaction (S)-4-amino-5-oxopentanoate + tRNA(Glu) + NADP(+) = L-glutamyl-tRNA(Glu) + NADPH + H(+). The protein operates within porphyrin-containing compound metabolism; protoporphyrin-IX biosynthesis; 5-aminolevulinate from L-glutamyl-tRNA(Glu): step 1/2. Catalyzes the NADPH-dependent reduction of glutamyl-tRNA(Glu) to glutamate 1-semialdehyde (GSA). The polypeptide is Glutamyl-tRNA reductase (Myxococcus xanthus (strain DK1622)).